The following is a 705-amino-acid chain: Ribosomal RNA large subunit methyltransferase K/L (705 aa).

A THUMP domain is found at 42–154 (LAQKVCLSTR…RYGVSMYIDY (113 aa)).

Belongs to the methyltransferase superfamily. RlmKL family.

The protein resides in the cytoplasm. It catalyses the reaction guanosine(2445) in 23S rRNA + S-adenosyl-L-methionine = N(2)-methylguanosine(2445) in 23S rRNA + S-adenosyl-L-homocysteine + H(+). The catalysed reaction is guanosine(2069) in 23S rRNA + S-adenosyl-L-methionine = N(2)-methylguanosine(2069) in 23S rRNA + S-adenosyl-L-homocysteine + H(+). Functionally, specifically methylates the guanine in position 2445 (m2G2445) and the guanine in position 2069 (m7G2069) of 23S rRNA. The chain is Ribosomal RNA large subunit methyltransferase K/L from Pseudoalteromonas translucida (strain TAC 125).